Here is a 168-residue protein sequence, read N- to C-terminus: Siroheme decarboxylase NirH subunit (168 aa).

The protein belongs to the Ahb/Nir family. In terms of assembly, probably forms a complex composed of NirD, NirL, NirG and NirH. All proteins are required for the total conversion of siroheme to didecarboxysiroheme.

It catalyses the reaction siroheme + 2 H(+) = 12,18-didecarboxysiroheme + 2 CO2. Its pathway is porphyrin-containing compound metabolism. Its function is as follows. Involved in heme d1 biosynthesis. Catalyzes the decarboxylation of siroheme into didecarboxysiroheme. The chain is Siroheme decarboxylase NirH subunit from Stutzerimonas stutzeri (Pseudomonas stutzeri).